Here is a 496-residue protein sequence, read N- to C-terminus: Aminoacetaldehyde dehydrogenase (496 aa).

Residues Leu166, Trp168, Lys192, Ser246, Thr249, and Tyr256 each contribute to the NADH site. Glu268 functions as the Proton acceptor in the catalytic mechanism. Cys269 contributes to the NADH binding site. Cys303 acts as the Nucleophile in catalysis. Positions 353 and 398 each coordinate NADH.

This sequence belongs to the aldehyde dehydrogenase family. As to quaternary structure, homotetramer, formed by two symmetrical dimers.

It catalyses the reaction aminoacetaldehyde + NAD(+) + H2O = glycine + NADH + 2 H(+). It carries out the reaction 3-aminopropanal + NAD(+) + H2O = beta-alanine + NADH + 2 H(+). In terms of biological role, NAD(+)-dependent aminoaldehyde dehydrogenase highly efficient with protonated aminoacetaldehyde (ACTAL) and 3-aminopropanaldehyde (APAL). Likely participates in a still uncharacterized metabolic pathway present in proteobacteria species, in which ACTAL might be an intermediate, yielding glycine. Highly prefers NAD(+) over NADP(+). Shows very poor activity with acetaldehyde, propanaldehyde, butanaldehyde, pentanaldehyde, dimethylaminoacetaldehyde, trimethylaminoacetaldehyde (betaine aldehyde), trimethylaminobutanaldehyde, short aliphatic hydroxyaldehydes such as 3-hydroxypropanaldehyde and 2-hydroxypropanaldehyde (lactaldehyde), and aromatic aldehydes. The chain is Aminoacetaldehyde dehydrogenase from Pseudomonas aeruginosa (strain ATCC 15692 / DSM 22644 / CIP 104116 / JCM 14847 / LMG 12228 / 1C / PRS 101 / PAO1).